Here is a 421-residue protein sequence, read N- to C-terminus: Functional amyloid transporter FapF (421 aa).

The N-terminal stretch at 1 to 24 (MTQTLSLRAVLCATTLVSPFLAQA) is a signal peptide. The stretch at 23 to 64 (QAATESEVEALKKELLELRQRYEAQQNALMVLEQRVRQVEAQ) forms a coiled coil.

The protein belongs to the amyloid transporter (TC 9.B.153) family.

Its subcellular location is the secreted. The protein localises to the cell surface. The protein resides in the cell outer membrane. Functionally, transports fibril components across the outer membrane. Upon overexpression of the endogenous six-gene locus (fapA-fapF), cells form large clumps during liquid growth, make large amounts of biofilm and produce amyloid fibrils. In Pseudomonas aeruginosa (strain ATCC 15692 / DSM 22644 / CIP 104116 / JCM 14847 / LMG 12228 / 1C / PRS 101 / PAO1), this protein is Functional amyloid transporter FapF.